Consider the following 339-residue polypeptide: Heat-inducible transcription repressor HrcA (339 aa).

This sequence belongs to the HrcA family.

In terms of biological role, negative regulator of class I heat shock genes (grpE-dnaK-dnaJ and groELS operons). Prevents heat-shock induction of these operons. This chain is Heat-inducible transcription repressor HrcA, found in Clostridioides difficile (strain 630) (Peptoclostridium difficile).